The following is a 643-amino-acid chain: COP9 signalosome complex subunit 10 (643 aa).

A compositionally biased stretch (acidic residues) spans 1–33 (MTDESDNYNDFMMSDEDMDSIEMEDEENDVEGD). Residues 1–37 (MTDESDNYNDFMMSDEDMDSIEMEDEENDVEGDEGQR) form a disordered region. The 187-residue stretch at 331–517 (CKEEFWECLK…DTVTFYSEQH (187 aa)) folds into the PCI domain. A compositionally biased stretch (polar residues) spans 573 to 584 (DSQSHSKSNTKS). The interval 573–594 (DSQSHSKSNTKSMSRHVSGHDP) is disordered.

In terms of assembly, component of a COP9 signalosome-like (CSN) complex.

The protein resides in the cytoplasm. The protein localises to the nucleus. Component of the COP9 signalosome (CSN) complex that acts as an regulator of the ubiquitin (Ubl) conjugation pathway by mediating the deneddylation of the cullin subunit of SCF-type E3 ubiquitin-protein ligase complexes. The CSN complex is involved in the regulation of the mating pheromone response. This chain is COP9 signalosome complex subunit 10 (RRI2), found in Candida glabrata (strain ATCC 2001 / BCRC 20586 / JCM 3761 / NBRC 0622 / NRRL Y-65 / CBS 138) (Yeast).